Here is a 195-residue protein sequence, read N- to C-terminus: dTTP/UTP pyrophosphatase (195 aa).

Residue aspartate 77 is the Proton acceptor of the active site.

This sequence belongs to the Maf family. YhdE subfamily. It depends on a divalent metal cation as a cofactor.

It localises to the cytoplasm. The enzyme catalyses dTTP + H2O = dTMP + diphosphate + H(+). It carries out the reaction UTP + H2O = UMP + diphosphate + H(+). Its function is as follows. Nucleoside triphosphate pyrophosphatase that hydrolyzes dTTP and UTP. May have a dual role in cell division arrest and in preventing the incorporation of modified nucleotides into cellular nucleic acids. The chain is dTTP/UTP pyrophosphatase from Flavobacterium psychrophilum (strain ATCC 49511 / DSM 21280 / CIP 103535 / JIP02/86).